Reading from the N-terminus, the 224-residue chain is Pyridoxine/pyridoxamine 5'-phosphate oxidase (224 aa).

Residues 19–22 (RGEY) and Lys81 contribute to the substrate site. FMN is bound by residues 76–81 (RSVLCK), 91–92 (FT), Lys98, and Gln120. 2 residues coordinate substrate: Tyr138 and Arg142. Residues 155-156 (QS) and Trp201 contribute to the FMN site. 207 to 209 (RMH) is a binding site for substrate. Arg211 is an FMN binding site.

This sequence belongs to the pyridoxamine 5'-phosphate oxidase family. Homodimer. FMN is required as a cofactor.

It carries out the reaction pyridoxamine 5'-phosphate + O2 + H2O = pyridoxal 5'-phosphate + H2O2 + NH4(+). The enzyme catalyses pyridoxine 5'-phosphate + O2 = pyridoxal 5'-phosphate + H2O2. Its pathway is cofactor metabolism; pyridoxal 5'-phosphate salvage; pyridoxal 5'-phosphate from pyridoxamine 5'-phosphate: step 1/1. It functions in the pathway cofactor metabolism; pyridoxal 5'-phosphate salvage; pyridoxal 5'-phosphate from pyridoxine 5'-phosphate: step 1/1. Functionally, catalyzes the oxidation of either pyridoxine 5'-phosphate (PNP) or pyridoxamine 5'-phosphate (PMP) into pyridoxal 5'-phosphate (PLP). The protein is Pyridoxine/pyridoxamine 5'-phosphate oxidase of Mycobacterium bovis (strain ATCC BAA-935 / AF2122/97).